Here is a 428-residue protein sequence, read N- to C-terminus: Enolase (428 aa).

Residue Q163 coordinates (2R)-2-phosphoglycerate. E205 acts as the Proton donor in catalysis. Mg(2+) contacts are provided by D242, E285, and D312. Positions 337, 366, 367, and 388 each coordinate (2R)-2-phosphoglycerate. Residue K337 is the Proton acceptor of the active site.

Belongs to the enolase family. Mg(2+) is required as a cofactor.

The protein resides in the cytoplasm. The protein localises to the secreted. It is found in the cell surface. The enzyme catalyses (2R)-2-phosphoglycerate = phosphoenolpyruvate + H2O. The protein operates within carbohydrate degradation; glycolysis; pyruvate from D-glyceraldehyde 3-phosphate: step 4/5. Catalyzes the reversible conversion of 2-phosphoglycerate (2-PG) into phosphoenolpyruvate (PEP). It is essential for the degradation of carbohydrates via glycolysis. The sequence is that of Enolase from Nitrosomonas europaea (strain ATCC 19718 / CIP 103999 / KCTC 2705 / NBRC 14298).